A 229-amino-acid polypeptide reads, in one-letter code: Small ribosomal subunit protein uS3 (229 aa).

Residues 39–107 (VRKFLEKKLK…PAQINIAEIR (69 aa)) enclose the KH type-2 domain.

This sequence belongs to the universal ribosomal protein uS3 family. As to quaternary structure, part of the 30S ribosomal subunit. Forms a tight complex with proteins S10 and S14.

Functionally, binds the lower part of the 30S subunit head. Binds mRNA in the 70S ribosome, positioning it for translation. This Shewanella loihica (strain ATCC BAA-1088 / PV-4) protein is Small ribosomal subunit protein uS3.